The following is a 225-amino-acid chain: Small ribosomal subunit protein uS2 (225 aa).

It belongs to the universal ribosomal protein uS2 family.

The polypeptide is Small ribosomal subunit protein uS2 (Metallosphaera sedula (strain ATCC 51363 / DSM 5348 / JCM 9185 / NBRC 15509 / TH2)).